The sequence spans 289 residues: Leucine--tRNA ligase subunit beta (289 aa).

Positions 45 to 49 match the 'KMSKS' region motif; the sequence is KMSKS. ATP is bound at residue lysine 48.

Belongs to the class-I aminoacyl-tRNA synthetase family. As to quaternary structure, seems to consist of an alpha chain and a beta chain.

Its subcellular location is the cytoplasm. The catalysed reaction is tRNA(Leu) + L-leucine + ATP = L-leucyl-tRNA(Leu) + AMP + diphosphate. The protein is Leucine--tRNA ligase subunit beta (leuS') of Aquifex aeolicus (strain VF5).